The chain runs to 969 residues: Liprin-beta-1 (969 aa).

Position 37 is a phosphoserine (serine 37). The residue at position 39 (threonine 39) is a Phosphothreonine. Serine 40 carries the phosphoserine modification. A coiled-coil region spans residues 99 to 310 (GDVYQERLAR…CLSRYRKMQD (212 aa)). The residue at position 291 (lysine 291) is an N6-acetyllysine. Disordered stretches follow at residues 342–361 (DLER…RDLL), 381–407 (LLPP…FEEG), and 424–482 (GVST…RKAR). The segment covering 346 to 358 (STSSTPGMGSPSR) has biased composition (low complexity). Phosphoserine is present on residues serine 403 and serine 435. Over residues 426–438 (STSSLQKSSSLGN) the composition is skewed to low complexity. Positions 439–452 (LKKEASDGTDKAPT) are enriched in basic and acidic residues. Residue lysine 440 forms a Glycyl lysine isopeptide (Lys-Gly) (interchain with G-Cter in SUMO2) linkage. Serine 500 is modified (phosphoserine). The segment covering 518–529 (AGTSRSKGSQGT) has biased composition (polar residues). Residues 518–593 (AGTSRSKGSQ…PRLGWSRDLG (76 aa)) form a disordered region. Serine 538 is modified (phosphoserine). Residues 543-557 (KKSRGIMRLFGKLRR) are compositionally biased toward basic residues. Residues serine 560 and serine 595 each carry the phosphoserine modification. SAM domains are found at residues 606–670 (WTKE…LGSE) and 678–741 (LDFN…LRIN). A phosphoserine mark is found at serine 753 and serine 757. The region spanning 763–835 (VQQWTNHRVM…ATHFNLLIGA (73 aa)) is the SAM 3 domain. A phosphoserine mark is found at serine 957, serine 959, and serine 961. At threonine 963 the chain carries Phosphothreonine.

It belongs to the liprin family. Liprin-beta subfamily. As to quaternary structure, forms homodimers and heterodimers. Interacts with S100A4 in a Ca(2+)-dependent mode. Part of a cortical microtubule stabilization complex (CMSC) composed of KANK1, PPFIA1, PPFIBP1, ERC1/ELKS, PHLDB2/LL5beta, CLASPs, KIF21A and possibly additional interactors; within CMSCs KANK1 and PHLDB2/LL5beta seem to be the core components for recruiting microtubule-binding proteins KIF21A and CLASPs, whereas PPFIA1, PPFIBP1 and ERC1/ELKS serve as scaffolds for protein clustering. Interacts with KANK1 (via CC1 domain, residues 244-339).

It localises to the cytoplasm. Its subcellular location is the cell cortex. In terms of biological role, may regulate the disassembly of focal adhesions. Did not bind receptor-like tyrosine phosphatases type 2A. This is Liprin-beta-1 (Ppfibp1) from Mus musculus (Mouse).